The sequence spans 570 residues: Proline--tRNA ligase (570 aa).

The protein belongs to the class-II aminoacyl-tRNA synthetase family. ProS type 1 subfamily. Homodimer.

It is found in the cytoplasm. The catalysed reaction is tRNA(Pro) + L-proline + ATP = L-prolyl-tRNA(Pro) + AMP + diphosphate. Functionally, catalyzes the attachment of proline to tRNA(Pro) in a two-step reaction: proline is first activated by ATP to form Pro-AMP and then transferred to the acceptor end of tRNA(Pro). As ProRS can inadvertently accommodate and process non-cognate amino acids such as alanine and cysteine, to avoid such errors it has two additional distinct editing activities against alanine. One activity is designated as 'pretransfer' editing and involves the tRNA(Pro)-independent hydrolysis of activated Ala-AMP. The other activity is designated 'posttransfer' editing and involves deacylation of mischarged Ala-tRNA(Pro). The misacylated Cys-tRNA(Pro) is not edited by ProRS. The polypeptide is Proline--tRNA ligase (Neisseria meningitidis serogroup B (strain ATCC BAA-335 / MC58)).